The chain runs to 462 residues: B3 domain-containing protein REM8 (462 aa).

3 DNA-binding regions (TF-B3) span residues 11–103 (NKHF…LGPS), 148–243 (CFSQ…LCSR), and 249–346 (FVKL…FSKI). Positions 351–419 (FEAEDRRHKR…NLQKTQACSV (69 aa)) are disordered. Positions 369–397 (ETDKGEPSRATKMGPELEKREKTAEKGEP) are enriched in basic and acidic residues. The span at 399 to 418 (RASNKSSGKQGNLQKTQACS) shows a compositional bias: polar residues.

The protein resides in the nucleus. The chain is B3 domain-containing protein REM8 (REM8) from Arabidopsis thaliana (Mouse-ear cress).